The sequence spans 86 residues: Protein GOLVEN 1 (86 aa).

Positions 1–29 (MSCSLRSGLVIVFCFILLLLSSNVGCASA) are cleaved as a signal peptide. The propeptide occupies 30-70 (ARRLRSHKHHHHKVASLDVFNGGERRRALGGVETGEEVVVM). Tyrosine 72 carries the post-translational modification Sulfotyrosine. Position 80 is a hydroxyproline (proline 80). Positions 84–86 (EKS) are excised as a propeptide.

This sequence belongs to the RGF family. In terms of assembly, binds to LRR receptor-like serine/threonine-protein kinases to trigger their dimerization with SERK proteins and subsequent signaling. In terms of tissue distribution, expressed in stems, hypocotyls, cotyledons, leaves, flowers, shoot apex, siliques, stamens and petals.

It localises to the endoplasmic reticulum. Its subcellular location is the secreted. Signaling peptide (root growth factor) that regulates the pattern of root growth and lateral root development by modulating the length and the number of cortical cells in the root apical meristem (RAM), and the anticlinal asymmetric cell divisions in lateral root initiation cells. Also involved in the regulation of hypocotyl bending and root gravitropism in a PIN2-traffic dependent manner, thus influencing the formation of auxin gradients. Maintains the postembryonic root stem cell niche. In Arabidopsis thaliana (Mouse-ear cress), this protein is Protein GOLVEN 1.